The primary structure comprises 71 residues: Small ribosomal subunit protein bS21 (71 aa).

Belongs to the bacterial ribosomal protein bS21 family.

The chain is Small ribosomal subunit protein bS21 from Photobacterium profundum (strain SS9).